A 141-amino-acid polypeptide reads, in one-letter code: Large ribosomal subunit protein uL16c (141 aa).

Over residues 1 to 17 (MLSPRRTKYRKQHRGRL) the composition is skewed to basic residues. The tract at residues 1–20 (MLSPRRTKYRKQHRGRLKGT) is disordered.

It belongs to the universal ribosomal protein uL16 family. As to quaternary structure, part of the 50S ribosomal subunit.

The protein localises to the plastid. The protein resides in the chloroplast. This Staurastrum punctulatum (Green alga) protein is Large ribosomal subunit protein uL16c.